The sequence spans 183 residues: Microfibrillar-associated protein 2 (183 aa).

Positions 1–17 (MRAAYLFLLFLPAGLLA) form a signal peptide, or 19. The residue at position 18 (Gln18) is a Pyrrolidone carboxylic acid. Sulfotyrosine occurs at positions 47, 48, and 50. Residues 58–94 (SEEQFQFQSQQQVQQEVIPAPTPEPGNAELEPTEPGP) form a disordered region. The span at 60–74 (EQFQFQSQQQVQQEV) shows a compositional bias: low complexity. The ShKT domain maps to 153-183 (CRDKFSKCGVMASSGLCQSVAASCARSCGSC). 3 cysteine pairs are disulfide-bonded: Cys153–Cys183, Cys160–Cys176, and Cys169–Cys180.

It belongs to the MFAP family. In terms of assembly, forms a ternary complex with BGN and ELN. Interacts with FBN1 (via N-terminal domain) and FBN2. Post-translationally, forms intermolecular disulfide bonds either with other MAGP-1 molecules or with other components of the microfibrils. May form transglutaminase cross-links. O-glycosylated.

It localises to the secreted. Its subcellular location is the extracellular space. The protein resides in the extracellular matrix. Its function is as follows. Component of the elastin-associated microfibrils. The chain is Microfibrillar-associated protein 2 (MFAP2) from Homo sapiens (Human).